The following is a 238-amino-acid chain: 3-dehydroquinate dehydratase (238 aa).

Residues 35 to 37 (ELR) and arginine 70 each bind 3-dehydroquinate. Catalysis depends on histidine 133, which acts as the Proton donor/acceptor. Residue lysine 160 is the Schiff-base intermediate with substrate of the active site. The 3-dehydroquinate site is built by arginine 202 and glutamine 225.

The protein belongs to the type-I 3-dehydroquinase family. Homodimer.

The enzyme catalyses 3-dehydroquinate = 3-dehydroshikimate + H2O. Its pathway is metabolic intermediate biosynthesis; chorismate biosynthesis; chorismate from D-erythrose 4-phosphate and phosphoenolpyruvate: step 3/7. Functionally, involved in the third step of the chorismate pathway, which leads to the biosynthesis of aromatic amino acids. Catalyzes the cis-dehydration of 3-dehydroquinate (DHQ) and introduces the first double bond of the aromatic ring to yield 3-dehydroshikimate. This chain is 3-dehydroquinate dehydratase, found in Staphylococcus aureus (strain USA300).